Here is a 622-residue protein sequence, read N- to C-terminus: Apical membrane antigen 1 (622 aa).

A signal peptide spans 1–24; sequence MRKLYCVLLLSAFEFTYMINFGRG. At 25-546 the chain is on the extracellular side; it reads QNYWEHPYQK…EHKPTYDKMK (522 aa). 5 cysteine pairs are disulfide-bonded: Cys149/Cys302, Cys217/Cys247, Cys263/Cys275, Cys320/Cys418, and Cys337/Cys409. Asn162 carries an N-linked (GlcNAc...) asparagine glycan. Asn286, Asn371, Asn421, Asn422, and Asn499 each carry an N-linked (GlcNAc...) asparagine glycan. Disulfide bonds link Cys443/Cys502, Cys490/Cys507, and Cys492/Cys509. Residues 547–567 traverse the membrane as a helical segment; sequence IIIASSAAVAVLATILMVYLY. The Cytoplasmic portion of the chain corresponds to 568 to 622; that stretch reads KRKGNAEKYDKMDEPQDYGKSNSRNDEMLDPEASFWGEEKRASHTTPVLMEKPYY. Residues 577 to 607 form a disordered region; the sequence is DKMDEPQDYGKSNSRNDEMLDPEASFWGEEK.

This sequence belongs to the apicomplexan parasites AMA1 family.

It localises to the membrane. Its function is as follows. Involved in parasite invasion of erythrocytes. The chain is Apical membrane antigen 1 (AMA-1) from Plasmodium falciparum (isolate 7G8).